Consider the following 315-residue polypeptide: Ribosomal protein L11 methyltransferase (315 aa).

T161, G182, D204, and N248 together coordinate S-adenosyl-L-methionine.

This sequence belongs to the methyltransferase superfamily. PrmA family.

Its subcellular location is the cytoplasm. The enzyme catalyses L-lysyl-[protein] + 3 S-adenosyl-L-methionine = N(6),N(6),N(6)-trimethyl-L-lysyl-[protein] + 3 S-adenosyl-L-homocysteine + 3 H(+). Functionally, methylates ribosomal protein L11. This is Ribosomal protein L11 methyltransferase from Shouchella clausii (strain KSM-K16) (Alkalihalobacillus clausii).